Reading from the N-terminus, the 207-residue chain is Small ribosomal subunit protein uS4 (207 aa).

Residues 97 to 159 (SRLDNVCYRM…AKSQLRIQAA (63 aa)) form the S4 RNA-binding domain.

This sequence belongs to the universal ribosomal protein uS4 family. Part of the 30S ribosomal subunit. Contacts protein S5. The interaction surface between S4 and S5 is involved in control of translational fidelity.

Functionally, one of the primary rRNA binding proteins, it binds directly to 16S rRNA where it nucleates assembly of the body of the 30S subunit. Its function is as follows. With S5 and S12 plays an important role in translational accuracy. The sequence is that of Small ribosomal subunit protein uS4 from Halorhodospira halophila (strain DSM 244 / SL1) (Ectothiorhodospira halophila (strain DSM 244 / SL1)).